A 178-amino-acid polypeptide reads, in one-letter code: Cytochrome b6-f complex iron-sulfur subunit 2 (178 aa).

Residues 17–36 traverse the membrane as a helical segment; the sequence is LLNFFTGAIVATTASAAIYP. Positions 61 to 161 constitute a Rieske domain; the sequence is GHPIPASQIL…VQVKDDYIWI (101 aa). Residues Cys107, His109, Cys125, and His128 each coordinate [2Fe-2S] cluster. Residues Cys112 and Cys127 are joined by a disulfide bond.

Belongs to the Rieske iron-sulfur protein family. As to quaternary structure, the 4 large subunits of the cytochrome b6-f complex are cytochrome b6, subunit IV (17 kDa polypeptide, PetD), cytochrome f and the Rieske protein, while the 4 small subunits are PetG, PetL, PetM and PetN. The complex functions as a dimer. [2Fe-2S] cluster is required as a cofactor.

It localises to the cellular thylakoid membrane. The catalysed reaction is 2 oxidized [plastocyanin] + a plastoquinol + 2 H(+)(in) = 2 reduced [plastocyanin] + a plastoquinone + 4 H(+)(out). Component of the cytochrome b6-f complex, which mediates electron transfer between photosystem II (PSII) and photosystem I (PSI), cyclic electron flow around PSI, and state transitions. This is Cytochrome b6-f complex iron-sulfur subunit 2 from Nostoc sp. (strain PCC 7120 / SAG 25.82 / UTEX 2576).